Here is a 900-residue protein sequence, read N- to C-terminus: Formin-like protein 5 (900 aa).

A helical; Signal-anchor transmembrane segment spans residues S15–L32. The interval R136–D209 is disordered. A compositionally biased stretch (pro residues) spans P160–R173. Residues I214–L234 traverse the membrane as a helical segment. 2 disordered regions span residues S273–K440 and A849–D900. A compositionally biased stretch (polar residues) spans H281–S304. Over residues L307–L316 the composition is skewed to basic and acidic residues. Positions F359–S368 are enriched in low complexity. Residues A369 to G429 are compositionally biased toward pro residues. One can recognise an FH2 domain in the interval A433 to S865. A compositionally biased stretch (polar residues) spans Q860–S876.

It belongs to the formin-like family. Class-I subfamily. In terms of tissue distribution, expressed in the endosperm. Localizes to the cell plate, a plant-specific membranous component that is assembled at the plane of cell division.

It is found in the membrane. Its function is as follows. Might be involved in the organization and polarity of the actin cytoskeleton. Interacts with the barbed end of actin filaments and nucleates actin-filament polymerization in vitro. Seems to play a role in cytokinesis. This chain is Formin-like protein 5 (FH5), found in Arabidopsis thaliana (Mouse-ear cress).